A 372-amino-acid chain; its full sequence is High-affinity lysophosphatidic acid receptor (372 aa).

At 1–38 (MGCNNTALDNCMLPNLSIATAPLDLRFAFSTPLRMLLA) the chain is on the extracellular side. 2 N-linked (GlcNAc...) asparagine glycosylation sites follow: N4 and N15. The helical transmembrane segment at 39-59 (IIMILMIAIAFLGNAIVCLIV) threads the bilayer. Residues 60–80 (YQKPAMRSAINLLLATLAFSD) are Cytoplasmic-facing. A helical transmembrane segment spans residues 81 to 101 (IMLSLFCMPFTAVTIITGSWL). Residues 102 to 108 (FGTQFCQ) are Extracellular-facing. Residues 109-129 (ISAMLYWFFVLEGVAILLIIS) form a helical membrane-spanning segment. Residues 130 to 149 (VDRFLIIVQRQDKLNPHRAK) are Cytoplasmic-facing. The helical transmembrane segment at 150–170 (IMIAASWVLSFCISLPSVVGW) threads the bilayer. Topologically, residues 171-198 (TLVEVPTRAPQCVLGYTEFSADRVYAVM) are extracellular. Residues 199–219 (LIVAVFFIPFSVMLYSYLCIL) form a helical membrane-spanning segment. Residues 220–268 (NTVRRNAVRIHTHADSLCLSQVSKLGLMGLQRPHQMNVDMSFKTRAFTT) are Cytoplasmic-facing. A helical transmembrane segment spans residues 269-289 (ILILFIGFSLCWLPHSVFSLL). Topologically, residues 290–301 (SVFSRTFYYSSS) are extracellular. Residues 302–324 (FYSISTCTLWLTYLKSVFNPVIY) traverse the membrane as a helical segment. At 325 to 372 (CWRIKKFREACLEFMPKTFKILPNVRGRTRRRIRPSTIYVCGEHQSAV) the chain is on the cytoplasmic side.

Belongs to the G-protein coupled receptor 1 family. As to expression, ubiquitously expressed.

The protein resides in the cell membrane. In terms of biological role, highly selective receptor for lysophosphatidic acid (LPA), a mediator of diverse cellular activities. This is High-affinity lysophosphatidic acid receptor from Xenopus laevis (African clawed frog).